A 651-amino-acid chain; its full sequence is MIKITFPDNSVREYAKGTTAMQIAESISSRLAQEVLAASVNGEVWDLSRPINDDATVKLLKWEDEEGKHAFWHSSAHLMAEALQELYPGIKFGIGPAIENGFYYDVDPGEAVIKEGDFAAIEAKMLELVAKKEEIKRQDITKADAMKMFGDRGEEYKTELISELEDGTITTYTQGSFTDLCRGPHLPNTSYLKAVKILSVAGAYWRGDEKRKQLVRLYGITFPKKKMLDEYLTLLEEAKKRDHRKIGKEMDLFMFSDTVGKGLPMWLPKGTALRLRLQEFLRRIQARYNYQEVMCPPIGNKLLYITSGHYAKYGKDSFQPIHTPEEGEEYFLKPMNCPHHCMIYKNSPRSYKDLPLRLAEFGTVCRYEQSGELHGLTRVRSFTQDDAHIFCRPDQVKQEFLNVMDIISIVFKTMNFENFEAQISLRDKVNREKYIGSDENWEKAEQAIVEACEEKGLKAKIEYGEAAFYGPKLDFMVKDAIGRRWQLGTIQVDYNLPERFQLEYTGADNQKHRPVMIHRAPFGSMERFVAVLIEHTAGKFPLWLTPEQVCIMPISEKFNDYAWQIARELGNQEIRAIVDDRNEKIGRKIRDNELKRIPYMLIVGEKEAENSEVSVRKQGEGDKGSMKIATFAALLNGEVEEMMNRWQKSND.

A TGS domain is found at 1-61 (MIKITFPDNS…NDDATVKLLK (61 aa)). The interval 242–541 (DHRKIGKEMD…LIEHTAGKFP (300 aa)) is catalytic. 3 residues coordinate Zn(2+): Cys-337, His-388, and His-518.

The protein belongs to the class-II aminoacyl-tRNA synthetase family. Homodimer. Zn(2+) is required as a cofactor.

The protein localises to the cytoplasm. It carries out the reaction tRNA(Thr) + L-threonine + ATP = L-threonyl-tRNA(Thr) + AMP + diphosphate + H(+). In terms of biological role, catalyzes the attachment of threonine to tRNA(Thr) in a two-step reaction: L-threonine is first activated by ATP to form Thr-AMP and then transferred to the acceptor end of tRNA(Thr). Also edits incorrectly charged L-seryl-tRNA(Thr). This is Threonine--tRNA ligase from Parabacteroides distasonis (strain ATCC 8503 / DSM 20701 / CIP 104284 / JCM 5825 / NCTC 11152).